The following is a 1783-amino-acid chain: MNLATRRRVRRTSRLVAKRALLLCILLYCTSFGFTQVLFEDVDVLQRLALRAELGSRAVPAGVISLRSGVILTTRARVTTPTRSLFPPELFWNCTIILSVRSHRLNSAFLFSVLSGNRIQLGLEISPGKLTLHAGPGNAATFLYNLHDGRWHHLAFVINGRSVTLHSPCSESDSGVTQELPVLPERLNPRGTFRLGGSSALLPGVVPFEGAVCQFDVVPSAQAQQNICSAIRRQCRENDTYRPAPPALLPLPSRHAPPLLAHTLPPNRTFTFTPTNFLLAPVNGAGGSSSVRMSDGVRPKPSSTTPPPLALMQTGIDAPLSLSLVTHKPSLRTPKPTASKPGVWLTPTKPARPKPTPGKASPKLNVSKSFGPKPTARLAASKLGSKAIGPKPTPLKPSKPVKKPTSVPKPNPTKNASIGPRPTNSNKKQNAILKPLPAPKPTVPKRPSPTNKKPLQPKNKSHTTPLTPKSTLAPNSTSKKPLPTLKSTSFTTAAPNKPPKTLETPKVNPDKSKTPVPYSTPRTPRFSIQSVTLPAFDDFQSFEVEPTRFSLLVGAPGLKGDQGESGLPGPPGKPGQPGMRGPRGPPGPHGKPGRPGPTGLKGKKGDPGLSPGKAPKGDKGDVGLPGPVGLVGVEGRKGQKGHPGPPGLPGEPGEQGPVGEAGAKGYPGRQGLPGPIGPVGPKGARGFIGIPGLFGLPGADGERGSPGPPGKRGKMGRPGFPGDFGERGPPGLDGEPGVIGAPGPPGVLGLIGDMGPAGTVGVPGLNGLKGVPGNMGESGLKGDKGDVGLPGEQGEIGFQGDKGVQGLPGLPGPRGKPGPQGKTGEIGPSGLPGPPGPEGFPGDIGKPGLNGPEGPKGKPGARGLPGPRGAAGREGDEGPLGPPGPFGLEGQMGSKGFPGALGLEGVKGEQGVTGKAGPMGERGLVGFIGPGGEAGLAGEKGDRGEMGLPGPPGEKGSTGHPGTPGEGGPPGPPGSPGSPGSRGPIGIRGPKGRRGPRGPDGVPGEIGTEGKKGPDGPPGKIGFPGHAGKIGESGEVGPKGFPGIQGPSGATGDKGIAGEPGPSGPPGTLGPQGNPGPKGPAGKVGDSGLPGEPGEKGSIGLAGNAGAAGLIGARGEPGLEGEAGPAGPDGTKGEKGDMGTEGEQGVRGDPGIKGKDGPPGDPGLTGVRGPEGKSGKSGERGKPGLKGAKGNIGHLGETGSVGKIGPIGTTGPKGSRGTIGHAGAPGRMGLQGDPGISGYEGHKGPQGPIGPPGPKGAKGEQGDDGKVEGPTGAPGLRGPVGKRGDRGEPGDPGYVGQQGVDGLRGKPGAPGLPGDPGPRGTQGPKGSKGEQGQKGKQGQQGERGSRGSPGVVGLPGPRGTVGREGREGFPGTDGLAGKDGSRGTPGDQGDDGEFGLPGKPGAPGKVGVIGLPGPQGSFGPKGERGLPGHPGPSGKRGFKGGMGLPGPQGDRGSKGQPGDIGEPGFPGMLGMFGPKGPPGDFGPKGIQGPKGPQGNMGRGGLAGPVGVIGPIGNPGSRGDTGNKGELGVQGPRGAPGPRGPPGLPGPPGIPLAMNQDFGLGVVQPVFRETHTQKIEGRGLLDMPMLDQAPEILRTLDYLSSLVHSLKNPLGTRDHPARLCRDLHDCRDTLYDGTYWIDPNLGCSSDSIEVMCNFSSGGRTCLRPITTAKLEFSVGRVQMNFLHLLSAGAEQRITIHCLNVTIWSHAPNQPPSQNAVQFHSWIGEVLEPDVLEDTCWQLNGRWQHADFLFRVLDPALLPVVRISNLPKVMPSSRFHLEVGPVCFL.

The signal sequence occupies residues 1-35; that stretch reads MNLATRRRVRRTSRLVAKRALLLCILLYCTSFGFT. The Laminin G-like domain occupies 73–235; the sequence is TTRARVTTPT…NICSAIRRQC (163 aa). Disordered stretches follow at residues 288–312, 327–524, 553–744, 772–1461, and 1512–1546; these read SSSV…LALM, HKPS…PRTP, VGAP…APGP, PGNM…GDIG, and GNPG…LPGP. Over residues 403-415 the composition is skewed to low complexity; that stretch reads KPTSVPKPNPTKN. Positions 436–447 are enriched in pro residues; it reads LPAPKPTVPKRP. The span at 462–494 shows a compositional bias: polar residues; it reads HTTPLTPKSTLAPNSTSKKPLPTLKSTSFTTAA. Positions 553–1547 are triple-helical region; that stretch reads VGAPGLKGDQ…RGPPGLPGPP (995 aa). The 55-residue stretch at 554–608 folds into the Collagen-like 1 domain; the sequence is GAPGLKGDQGESGLPGPPGKPGQPGMRGPRGPPGPHGKPGRPGPTGLKGKKGDPG. Low complexity-rich tracts occupy residues 622–633, 651–661, 735–744, 817–829, and 861–870; these read VGLPGPVGLVGV, EPGEQGPVGEA, EPGVIGAPGP, PGPQ…IGPS, and ARGLPGPRGA. 2 Collagen-like domains span residues 818 to 873 and 845 to 902; these read GPQG…AAGR and GKPG…GALG. Residues 926-935 show a composition bias toward gly residues; sequence GFIGPGGEAG. The span at 967–976 shows a compositional bias: pro residues; sequence GGPPGPPGSP. Composition is skewed to low complexity over residues 978–988 and 1098–1129; these read SPGSRGPIGIR and SIGL…AGPD. A Collagen-like 4 domain is found at 986 to 1043; that stretch reads GIRGPKGRRGPRGPDGVPGEIGTEGKKGPDGPPGKIGFPGHAGKIGESGEVGPKGFPG. 3 stretches are compositionally biased toward basic and acidic residues: residues 1131–1158, 1170–1182, and 1257–1267; these read TKGE…KDGP, PEGK…ERGK, and AKGEQGDDGKV. A Collagen-like 5 domain is found at 1269–1326; that stretch reads GPTGAPGLRGPVGKRGDRGEPGDPGYVGQQGVDGLRGKPGAPGLPGDPGPRGTQGPKG. Low complexity-rich tracts occupy residues 1334–1349 and 1396–1409; these read KGKQ…RGSP and LPGK…VGVI. Collagen-like domains follow at residues 1446 to 1503 and 1497 to 1549; these read GPQG…GLAG and GRGG…PPGI. The segment covering 1537 to 1546 has biased composition (pro residues); the sequence is PRGPPGLPGP. A propeptide spans 1551–1783 (C-terminal propeptide); that stretch reads LAMNQDFGLG…HLEVGPVCFL (233 aa). A Fibrillar collagen NC1 domain is found at 1589 to 1783; that stretch reads PEILRTLDYL…HLEVGPVCFL (195 aa). Intrachain disulfides connect C1619–C1651, C1660–C1781, and C1696–C1734. D1637, N1639, C1642, and D1645 together coordinate Ca(2+). Residue N1698 is glycosylated (N-linked (GlcNAc...) asparagine).

The protein belongs to the fibrillar collagen family. As to expression, expressed dynamically in the notochord from late epiboly, spreading to the anterior notochord by 24 hpf, and then throughout the notochord by 30 hpf. Subsequently, notochordal expression becomes restricted to the distal tip of the tail by 48 hpf and is no longer detectable by 72 hpf. Also expressed throughout the floor plate and hypochord at 24 hpf, and in forming head cartilages and the first forming tooth.

Its subcellular location is the secreted. The protein localises to the extracellular space. The protein resides in the extracellular matrix. In terms of biological role, may play a role during the calcification of cartilage and the transition of cartilage to bone. Together with col27a1b, plays a role in development of the notochord and axial skeleton. The polypeptide is Collagen alpha-1(XXVII) chain A (Danio rerio (Zebrafish)).